Here is a 327-residue protein sequence, read N- to C-terminus: Dipeptide transport ATP-binding protein DppD (327 aa).

Residues 4–254 (LNVDKLSVHF…PRHPYTQALL (251 aa)) form the ABC transporter domain. 40-47 (GESGSGKS) lines the ATP pocket.

Belongs to the ABC transporter superfamily. As to quaternary structure, the complex is composed of two ATP-binding proteins (DppD and DppF), two transmembrane proteins (DppB and DppC) and a solute-binding protein (DppA). MppA can replace DppA as binding protein for heme and ALA transport.

The protein localises to the cell inner membrane. The enzyme catalyses a dipeptide(out) + ATP + H2O = a dipeptide(in) + ADP + phosphate + H(+). Its function is as follows. Part of the ABC transporter DppABCDF involved in dipeptide transport. Responsible for energy coupling to the transport system. Functionally, when a foreign outer membrane heme receptor is expressed in E.coli, DppABCDF can also transport heme and its precursor, 5-aminolevulinic acid (ALA), from the periplasm into the cytoplasm. This chain is Dipeptide transport ATP-binding protein DppD (dppD), found in Escherichia coli (strain K12).